Reading from the N-terminus, the 455-residue chain is MTKSQTNPRGPAILSPADLTVIIVGLGIAGLTAAIECHRKGYTVIGLEKKPDANQLGDIIGLSGNSMRILAEWNNGSLAHLIDDDITCDVTALELFDAEGHRKLAMPYNANNPIQGYLFRRTGLLTSLCHYASQLGIDLRFGVTVDDYWETDSNAGVYANNEKITGDCVVAADGFHSKARGIITGENPEPKDIGVVAYRSIFDANAIADVPEAQWILKNAQTADIFHSYYGKDTMVAIGTAARGRYVHWGCAVRGALEEKYEAWMQPAPPDPILKCLESWPVGSKLAAGIARTPPGKCFQQSLRAMPPLKRWVSTGGRMIVIGDAAHSFLPYAGQGGNQAIEDAAVLGICLELAGTSNVPLALRVVEKLRHKRVSLIQKGSAEAGDSFLNAAWESDNAAEKPTAFTHQAWVYAHNCVDHAYEQFNAAAEAVMNGWEYTPTNIPANGKFRQEEGNI.

A helical membrane pass occupies residues 11 to 31 (PAILSPADLTVIIVGLGIAGL). The FAD site is built by Glu-48 and Gly-61. N-linked (GlcNAc...) asparagine glycosylation occurs at Asn-75. FAD is bound at residue Arg-121. Active-site residues include Arg-199 and Tyr-229. Asp-324 and Gly-337 together coordinate FAD.

This sequence belongs to the paxM FAD-dependent monooxygenase family. It depends on FAD as a cofactor.

It is found in the membrane. It catalyses the reaction notoamide E + NADPH + O2 + H(+) = notoamide C + NADP(+) + H2O. The enzyme catalyses notoamide E + NADPH + O2 + H(+) = notoamide D + NADP(+) + H2O. It functions in the pathway alkaloid biosynthesis. In terms of biological role, FAD-dependent monooxygenase; part of the gene cluster that mediates the biosynthesis of notoamide, a fungal indole alkaloid that belongs to a family of natural products containing a characteristic bicyclo[2.2.2]diazaoctane core. The first step of notoamide biosynthesis involves coupling of L-proline and L-tryptophan by the bimodular NRPS notE', to produce cyclo-L-tryptophan-L-proline called brevianamide F. The reverse prenyltransferase notF' then acts as a deoxybrevianamide E synthase and converts brevianamide F to deoxybrevianamide E via reverse prenylation at C-2 of the indole ring leading to the bicyclo[2.2.2]diazaoctane core. Deoxybrevianamide E is further hydroxylated at C-6 of the indole ring, likely catalyzed by the cytochrome P450 monooxygenase notG', to yield 6-hydroxy-deoxybrevianamide E. 6-hydroxy-deoxybrevianamide E is a specific substrate of the prenyltransferase notC' for normal prenylation at C-7 to produce 6-hydroxy-7-prenyl-deoxybrevianamide, also called notoamide S. As the proposed pivotal branching point in notoamide biosynthesis, notoamide S can be diverted to notoamide E through an oxidative pyran ring closure putatively catalyzed by either notH' cytochrome P450 monooxygenase or the notD' FAD-linked oxidoreductase. This step would be followed by an indole 2,3-epoxidation-initiated pinacol-like rearrangement catalyzed by the notB' FAD-dependent monooxygenase leading to the formation of notoamide C and notoamide D. On the other hand notoamide S is converted to notoamide T by notH' (or notD'), a bifunctional oxidase that also functions as the intramolecular Diels-Alderase responsible for generation of (-)-notoamide T. To generate antipodal (+)-notoaminide T, notH (or notD) in Aspergillus strain MF297-2 is expected to catalyze a Diels-Alder reaction leading to the opposite stereochemistry. The remaining oxidoreductase notD' (or notH') likely catalyzes the oxidative pyran ring formation to yield (-)-stephacidin A. The FAD-dependent monooxygenase notI' is highly similar to notB' and is predicted to catalyze a similar conversion from (-)-stephacidin A to (+)-notoamide B via the 2,3-epoxidation of (-)-stephacidin A followed by a pinacol-type rearrangement. Finally, it remains unclear which enzyme could be responsible for the final hydroxylation steps leading to notoamide A and sclerotiamide. This is Notoamide E oxidase notB' from Aspergillus versicolor.